Reading from the N-terminus, the 365-residue chain is Bifunctional chorismate mutase/prephenate dehydratase (365 aa).

The Chorismate mutase domain occupies 1–96 (MADQDQLKAL…SCLALEQPLK (96 aa)). R11, R28, K39, and E57 together coordinate substrate. In terms of domain architecture, Prephenate dehydratase spans 97–272 (VAYLGPEGTF…NSTRFLIIGN (176 aa)). An ACT domain is found at 284–361 (SIIVSMRNKP…VALKVLGSYP (78 aa)).

The protein localises to the cytoplasm. It catalyses the reaction chorismate = prephenate. The enzyme catalyses prephenate + H(+) = 3-phenylpyruvate + CO2 + H2O. It participates in amino-acid biosynthesis; L-phenylalanine biosynthesis; phenylpyruvate from prephenate: step 1/1. Its pathway is metabolic intermediate biosynthesis; prephenate biosynthesis; prephenate from chorismate: step 1/1. Catalyzes the Claisen rearrangement of chorismate to prephenate and the decarboxylation/dehydration of prephenate to phenylpyruvate. The sequence is that of Bifunctional chorismate mutase/prephenate dehydratase (pheA) from Pseudomonas aeruginosa (strain ATCC 15692 / DSM 22644 / CIP 104116 / JCM 14847 / LMG 12228 / 1C / PRS 101 / PAO1).